Consider the following 265-residue polypeptide: V0 assembly protein 1 (265 aa).

Residues 1-24 (MVFGQLYALFIFTLSCCISKTVQA) form the signal peptide. At 25–223 (DSSKESSSFI…ILSSIWTEGL (199 aa)) the chain is on the vacuolar side. 3 N-linked (GlcNAc...) asparagine glycosylation sites follow: N69, N104, and N172. Residues 224–244 (LMCLIVSALLLFILIVALSWI) form a helical membrane-spanning segment. Over 245–265 (SNLDITYGALEKSTNPIKKNN) the chain is Cytoplasmic. Positions 262–265 (KKNN) match the ER retention motif motif.

This sequence belongs to the VOA1 family. In terms of assembly, V-ATPase is a heteromultimeric enzyme composed of a peripheral catalytic V1 complex (components A to H) attached to an integral membrane V0 proton pore complex (components: a, c, c', c'', d, e, f and VOA1). Interacts with VMA21. Associates with the assembling V0 complex.

The protein resides in the vacuole membrane. It localises to the endoplasmic reticulum membrane. Accessory component of the V0 complex of vacuolar(H+)-ATPase (V-ATPase), a multisubunit enzyme composed of a peripheral complex (V1) that hydrolyzes ATP and a membrane integral complex (V0) that translocates protons. V-ATPase is responsible for acidifying and maintaining the pH of intracellular compartments. Functions with VMA21 in assembly of the V0 complex. The chain is V0 assembly protein 1 (VOA1) from Saccharomyces cerevisiae (strain ATCC 204508 / S288c) (Baker's yeast).